The following is a 71-amino-acid chain: Arrestin-D (71 aa).

Belongs to the arrestin family. As to expression, adrenal, cerebral cortex, heart, liver, lung, pituitary and testis.

In Rattus norvegicus (Rat), this protein is Arrestin-D (Dar).